We begin with the raw amino-acid sequence, 445 residues long: Gamma-glutamyl phosphate reductase (445 aa).

The protein belongs to the gamma-glutamyl phosphate reductase family.

Its subcellular location is the cytoplasm. It catalyses the reaction L-glutamate 5-semialdehyde + phosphate + NADP(+) = L-glutamyl 5-phosphate + NADPH + H(+). Its pathway is amino-acid biosynthesis; L-proline biosynthesis; L-glutamate 5-semialdehyde from L-glutamate: step 2/2. In terms of biological role, catalyzes the NADPH-dependent reduction of L-glutamate 5-phosphate into L-glutamate 5-semialdehyde and phosphate. The product spontaneously undergoes cyclization to form 1-pyrroline-5-carboxylate. This chain is Gamma-glutamyl phosphate reductase, found in Saccharopolyspora erythraea (strain ATCC 11635 / DSM 40517 / JCM 4748 / NBRC 13426 / NCIMB 8594 / NRRL 2338).